A 697-amino-acid chain; its full sequence is Long-chain-fatty-acid--CoA ligase 6 (697 aa).

A helical; Signal-anchor for type III membrane protein membrane pass occupies residues 25-45 (LSATTLVSVGALAAVLAYWLT). Over 46 to 697 (HRPKALQPPC…QIEELYLVSV (652 aa)) the chain is Cytoplasmic.

It belongs to the ATP-dependent AMP-binding enzyme family. Requires Mg(2+) as cofactor.

Its subcellular location is the mitochondrion outer membrane. It is found in the peroxisome membrane. The protein localises to the microsome membrane. It localises to the endoplasmic reticulum membrane. The enzyme catalyses a long-chain fatty acid + ATP + CoA = a long-chain fatty acyl-CoA + AMP + diphosphate. It catalyses the reaction (5Z,8Z,11Z,14Z)-eicosatetraenoate + ATP + CoA = (5Z,8Z,11Z,14Z)-eicosatetraenoyl-CoA + AMP + diphosphate. The catalysed reaction is 15-hydroxy-(5Z,8Z,11Z,13E)-eicosatetraenoate + ATP + CoA = 15-hydroxy-(5Z,8Z,11Z,13E)-eicosatetraenoyl-CoA + AMP + diphosphate. It carries out the reaction 12-hydroxy-(5Z,8Z,10E,14Z)-eicosatetraenoate + ATP + CoA = 12-hydroxy-(5Z,8Z,10E,14Z)-eicosatetraenoyl-CoA + AMP + diphosphate. The enzyme catalyses 5-hydroxy-(6E,8Z,11Z,14Z)-eicosatetraenoate + ATP + CoA = 5-hydroxy-(6E,8Z,11Z,14Z)-eicosatetraenoyl-CoA + AMP + diphosphate. It catalyses the reaction hexadecanoate + ATP + CoA = hexadecanoyl-CoA + AMP + diphosphate. The catalysed reaction is (E)-hexadec-2-enoate + ATP + CoA = (2E)-hexadecenoyl-CoA + AMP + diphosphate. Its function is as follows. Catalyzes the conversion of long-chain fatty acids to their active form acyl-CoA for both synthesis of cellular lipids, and degradation via beta-oxidation. Plays an important role in fatty acid metabolism in brain and the acyl-CoAs produced may be utilized exclusively for the synthesis of the brain lipid. The chain is Long-chain-fatty-acid--CoA ligase 6 (Acsl6) from Mus musculus (Mouse).